The chain runs to 215 residues: Thymidylate kinase (215 aa).

7–14 (GMEGSGKS) is a binding site for ATP.

It belongs to the thymidylate kinase family.

It catalyses the reaction dTMP + ATP = dTDP + ADP. In terms of biological role, phosphorylation of dTMP to form dTDP in both de novo and salvage pathways of dTTP synthesis. The protein is Thymidylate kinase of Nitratidesulfovibrio vulgaris (strain DSM 19637 / Miyazaki F) (Desulfovibrio vulgaris).